The following is a 205-amino-acid chain: High frequency lysogenization protein HflD homolog (205 aa).

Belongs to the HflD family.

The protein localises to the cytoplasm. Its subcellular location is the cell inner membrane. This is High frequency lysogenization protein HflD homolog from Aliivibrio fischeri (strain MJ11) (Vibrio fischeri).